The sequence spans 338 residues: Solute carrier family 35 member G5 (338 aa).

The tract at residues 1-21 (MAGSHPYFNLPDSTHPSPPSA) is disordered. The next 9 membrane-spanning stretches (helical) occupy residues 37-57 (TNGL…VGPL), 67-87 (LPSL…ALPL), 105-125 (CFCA…VQVV), 160-180 (CGLL…LWTL), 190-210 (ALGY…LLVY), 221-241 (TVAF…LFVL), 250-270 (LLSW…FTCV), 281-301 (LVCA…YYVL), and 305-325 (VAPF…IITA). The EamA 1 domain maps to 49–174 (LPAGFVGPLS…SILGLIIIVG (126 aa)). The 54-residue stretch at 272-325 (YAVTKAHPALVCAVLHSEVVVALILQYYVLHETVAPFDITGAGIVLGSIAIITA) folds into the EamA 2 domain.

This sequence belongs to the SLC35G solute transporter family.

The protein resides in the membrane. This Pan paniscus (Pygmy chimpanzee) protein is Solute carrier family 35 member G5 (SLC35G5).